We begin with the raw amino-acid sequence, 257 residues long: uncharacterized protein (257 aa).

An N-terminal signal peptide occupies residues 1 to 22 (MGYLKRFALYISVMILMFAIAG). The N-palmitoyl cysteine moiety is linked to residue cysteine 23. Cysteine 23 carries the S-diacylglycerol cysteine lipid modification.

It belongs to the staphylococcal tandem lipoprotein family.

Its subcellular location is the cell membrane. This is an uncharacterized protein from Staphylococcus aureus (strain MRSA252).